We begin with the raw amino-acid sequence, 64 residues long: Large ribosomal subunit protein bL35 (64 aa).

Positions M1–L44 are disordered. A compositionally biased stretch (basic residues) spans A10 to L44.

The protein belongs to the bacterial ribosomal protein bL35 family.

This Halorhodospira halophila (strain DSM 244 / SL1) (Ectothiorhodospira halophila (strain DSM 244 / SL1)) protein is Large ribosomal subunit protein bL35.